The following is a 75-amino-acid chain: Vacuolar ATPase assembly integral membrane protein VMA21 (75 aa).

The Cytoplasmic segment spans residues Met1–Gly8. The chain crosses the membrane as a helical span at residues Val9–Phe29. Topologically, residues Ser30 to Ser41 are lumenal. A helical membrane pass occupies residues Gly42–Met62. The Cytoplasmic portion of the chain corresponds to Glu63 to Asp75.

It belongs to the VMA21 family.

It is found in the endoplasmic reticulum membrane. It localises to the endoplasmic reticulum-Golgi intermediate compartment membrane. The protein resides in the cytoplasmic vesicle. Its subcellular location is the COPII-coated vesicle membrane. Functionally, required for the assembly of the V0 complex of the vacuolar ATPase (V-ATPase) in the endoplasmic reticulum. The chain is Vacuolar ATPase assembly integral membrane protein VMA21 from Vanderwaltozyma polyspora (strain ATCC 22028 / DSM 70294 / BCRC 21397 / CBS 2163 / NBRC 10782 / NRRL Y-8283 / UCD 57-17) (Kluyveromyces polysporus).